Here is a 483-residue protein sequence, read N- to C-terminus: Glutamyl-tRNA(Gln) amidotransferase subunit A (483 aa).

Residues Lys-76 and Ser-151 each act as charge relay system in the active site. The active-site Acyl-ester intermediate is Ser-175.

It belongs to the amidase family. GatA subfamily. As to quaternary structure, heterotrimer of A, B and C subunits.

It carries out the reaction L-glutamyl-tRNA(Gln) + L-glutamine + ATP + H2O = L-glutaminyl-tRNA(Gln) + L-glutamate + ADP + phosphate + H(+). Functionally, allows the formation of correctly charged Gln-tRNA(Gln) through the transamidation of misacylated Glu-tRNA(Gln) in organisms which lack glutaminyl-tRNA synthetase. The reaction takes place in the presence of glutamine and ATP through an activated gamma-phospho-Glu-tRNA(Gln). This is Glutamyl-tRNA(Gln) amidotransferase subunit A from Nitrosococcus oceani (strain ATCC 19707 / BCRC 17464 / JCM 30415 / NCIMB 11848 / C-107).